Consider the following 342-residue polypeptide: tRNA dimethylallyltransferase (342 aa).

39-46 (GPTGSGKT) lines the ATP pocket. 41-46 (TGSGKT) contributes to the substrate binding site. The interval 64-67 (DSMQ) is interaction with substrate tRNA.

Belongs to the IPP transferase family. In terms of assembly, monomer. Mg(2+) is required as a cofactor.

The catalysed reaction is adenosine(37) in tRNA + dimethylallyl diphosphate = N(6)-dimethylallyladenosine(37) in tRNA + diphosphate. Catalyzes the transfer of a dimethylallyl group onto the adenine at position 37 in tRNAs that read codons beginning with uridine, leading to the formation of N6-(dimethylallyl)adenosine (i(6)A). The protein is tRNA dimethylallyltransferase of Chlamydia abortus (strain DSM 27085 / S26/3) (Chlamydophila abortus).